The chain runs to 296 residues: Formamidopyrimidine-DNA glycosylase (296 aa).

P2 acts as the Schiff-base intermediate with DNA in catalysis. The active-site Proton donor is the E3. The Proton donor; for beta-elimination activity role is filled by K61. Residues H104, R128, and K174 each contribute to the DNA site. Residues 260–294 (HAYGQQGQACDRCGSNIIREKFANRSSHFCPRCQL) form an FPG-type zinc finger. The active-site Proton donor; for delta-elimination activity is R284.

Belongs to the FPG family. As to quaternary structure, monomer. The cofactor is Zn(2+).

It catalyses the reaction Hydrolysis of DNA containing ring-opened 7-methylguanine residues, releasing 2,6-diamino-4-hydroxy-5-(N-methyl)formamidopyrimidine.. The enzyme catalyses 2'-deoxyribonucleotide-(2'-deoxyribose 5'-phosphate)-2'-deoxyribonucleotide-DNA = a 3'-end 2'-deoxyribonucleotide-(2,3-dehydro-2,3-deoxyribose 5'-phosphate)-DNA + a 5'-end 5'-phospho-2'-deoxyribonucleoside-DNA + H(+). Involved in base excision repair of DNA damaged by oxidation or by mutagenic agents. Acts as a DNA glycosylase that recognizes and removes damaged bases. Has a preference for oxidized purines, such as 7,8-dihydro-8-oxoguanine (8-oxoG). Has AP (apurinic/apyrimidinic) lyase activity and introduces nicks in the DNA strand. Cleaves the DNA backbone by beta-delta elimination to generate a single-strand break at the site of the removed base with both 3'- and 5'-phosphates. The sequence is that of Formamidopyrimidine-DNA glycosylase from Corynebacterium diphtheriae (strain ATCC 700971 / NCTC 13129 / Biotype gravis).